The chain runs to 276 residues: METLELQGAKLRYHQVGQGPVLIFIPGANGTGDIFLPLAEQLKDHFTVVAVDRRDYGESELTEPLPDSASNPDSDYRVKRDAQDIAELAKSLSDEPVYILGSSSGSIVAMHVLKDYPEVVKKIAFHEPPINTFLPDSTYWKDKNDDIVHQILTEGLEKGMKTFGETLNIAPIDAKMMSQPADTEEGRIEQYKRTMFWLEFEIRQYTHSNITLDDFTKYSDKITLLNGTDSRGSFPQDVNFYINKETGIPIVDIPGGHLGYIQKPEGFADVLLNMWG.

The AB hydrolase-1 domain occupies 20-137 (PVLIFIPGAN…PPINTFLPDS (118 aa)). The disordered stretch occupies residues 57–76 (GESELTEPLPDSASNPDSDY).

Belongs to the AB hydrolase superfamily.

This is an uncharacterized protein from Staphylococcus aureus (strain USA300).